Consider the following 996-residue polypeptide: Sarcoplasmic/endoplasmic reticulum calcium ATPase 1 (996 aa).

At 1–48 the chain is on the cytoplasmic side; sequence MENAHTKSPAECLSYFGVNEHTGLSPDQFKKNLDKFGYNELPAEEGKS. Residues 49–69 traverse the membrane as a helical segment; that stretch reads IWDLIVEQFEDLLVRILLLAA. The Lumenal segment spans residues 70–89; that stretch reads CISFVLAWFEEGEETITAFV. Residues 90–110 form a helical membrane-spanning segment; it reads EPFVILLILIANAIVGVWQER. Residues 111-253 are Cytoplasmic-facing; sequence NAEDAIEALK…QEKTPLQAKL (143 aa). A helical membrane pass occupies residues 254 to 273; sequence DEFGEQLSKVISLICVAVWA. The Lumenal segment spans residues 274 to 295; that stretch reads INIGHFNDPVHGGSWIRGAVYY. The chain crosses the membrane as a helical span at residues 296-313; the sequence is FKIAVALAVAAIPEGLPA. Residues valine 304, alanine 305, isoleucine 307, and glutamate 309 each contribute to the Ca(2+) site. Topologically, residues 314 to 754 are cytoplasmic; the sequence is VITTCLALGT…EEGRAIYNNM (441 aa). Aspartate 351 acts as the 4-aspartylphosphate intermediate in catalysis. Residues aspartate 351 and threonine 353 each coordinate Mg(2+). Threonine 353, glutamate 442, arginine 489, lysine 512, arginine 557, threonine 622, glycine 623, aspartate 624, arginine 675, and lysine 681 together coordinate ATP. Aspartate 700 contributes to the Mg(2+) binding site. Asparagine 703 is an ATP binding site. Residues 755–774 form a helical membrane-spanning segment; the sequence is KQFIRYLISSNVGEVVCIFL. Residues asparagine 765 and glutamate 768 each contribute to the Ca(2+) site. Over 775–784 the chain is Lumenal; it reads TAALGLPEAL. A helical membrane pass occupies residues 785-805; the sequence is IPVQLLWVNLVTDGLPATALG. The interval 785–805 is interaction with PLN; it reads IPVQLLWVNLVTDGLPATALG. Positions 793, 796, and 797 each coordinate Ca(2+). At 806-825 the chain is on the cytoplasmic side; the sequence is FNPPDLDIMGKPPRSPKEPL. A helical membrane pass occupies residues 826–848; that stretch reads ISGWLFFRYMAIGGYVGAATVGG. Topologically, residues 849–894 are lumenal; sequence AAWWFLYDSTGPAVTYYQLSHFMQCHNHNEDFTGVDCDIFEASPPM. A disulfide bridge connects residues cysteine 873 and cysteine 885. A helical membrane pass occupies residues 895 to 914; it reads TMALSVLVTIEMCNALNSLS. Ca(2+) is bound at residue glutamate 905. Over 915–927 the chain is Cytoplasmic; the sequence is ENQSLIRMPPWSN. A helical membrane pass occupies residues 928 to 946; the sequence is LWLMAAMTLSMSLHFMIIY. Positions 929–940 are interaction with PLN; the sequence is WLMAAMTLSMSL. The Lumenal segment spans residues 947-961; it reads VDPLPMIFKLTHLTF. A helical membrane pass occupies residues 962–982; it reads DQWLMVFKLSFPVILIDEVLK. The Cytoplasmic segment spans residues 983–996; it reads FFARNYIETGKEVK.

Belongs to the cation transport ATPase (P-type) (TC 3.A.3) family. Type IIA subfamily. As to quaternary structure, interacts with sarcolipin (SLN). Interacts with phospholamban (PLN). Interacts with myoregulin (MRLN). Interacts with DWORF. Mg(2+) is required as a cofactor.

It is found in the endoplasmic reticulum membrane. It localises to the sarcoplasmic reticulum membrane. The enzyme catalyses Ca(2+)(in) + ATP + H2O = Ca(2+)(out) + ADP + phosphate + H(+). Inhibited by sarcolipin (SLN) and myoregulin (MRLN). Also shown to be inhibited by phospholamban (PLN) in vitro. Enhanced by DWORF; DWORF increases activity by displacing sarcolipin (SLN), phospholamban (PLN) and myoregulin (MRLN). In terms of biological role, key regulator of striated muscle performance by acting as the major Ca(2+) ATPase responsible for the reuptake of cytosolic Ca(2+) into the sarcoplasmic reticulum. Catalyzes the hydrolysis of ATP coupled with the translocation of calcium from the cytosol to the sarcoplasmic reticulum lumen. Contributes to calcium sequestration involved in muscular excitation/contraction. The sequence is that of Sarcoplasmic/endoplasmic reticulum calcium ATPase 1 (atp2a1) from Makaira nigricans (Atlantic blue marlin).